A 503-amino-acid polypeptide reads, in one-letter code: Maturase K (503 aa).

It belongs to the intron maturase 2 family. MatK subfamily.

It localises to the plastid. The protein localises to the chloroplast. Its function is as follows. Usually encoded in the trnK tRNA gene intron. Probably assists in splicing its own and other chloroplast group II introns. This chain is Maturase K, found in Stangeria eriopus (Natal grass cycad).